We begin with the raw amino-acid sequence, 220 residues long: Probable GTP-binding protein EngB (220 aa).

Residues 24–207 (PQPEVAFAGR…HELIESWIAP (184 aa)) enclose the EngB-type G domain. Residues 32–39 (GRSNAGKS), 59–63 (GRTQH), 81–84 (DLPG), 148–151 (TKCD), and 185–188 (LFSA) each bind GTP. Mg(2+) contacts are provided by Ser39 and Thr61.

Belongs to the TRAFAC class TrmE-Era-EngA-EngB-Septin-like GTPase superfamily. EngB GTPase family. Requires Mg(2+) as cofactor.

In terms of biological role, necessary for normal cell division and for the maintenance of normal septation. This is Probable GTP-binding protein EngB from Paraburkholderia phymatum (strain DSM 17167 / CIP 108236 / LMG 21445 / STM815) (Burkholderia phymatum).